A 381-amino-acid polypeptide reads, in one-letter code: Protein COS1 (381 aa).

At 1 to 42 (MKENELKNEKSVDVLSFKQLESQKIVLPQDLFRSSFTWFCYE) the chain is on the cytoplasmic side. A helical transmembrane segment spans residues 43–63 (IYKSLAFRIWMLLWLPLSVWW). Residues 64 to 72 (KLSNNCIYP) are Extracellular-facing. The chain crosses the membrane as a helical span at residues 73–93 (LIVSLLVLFLGPIFVLVICGL). Over 94–231 (SRKRSLSKQL…YRFKLTWFLK (138 aa)) the chain is Cytoplasmic. Residues 232 to 252 (RISNIFMLIPFLNFLCCIYVS) traverse the membrane as a helical segment. Topologically, residues 253-254 (RG) are extracellular. A helical transmembrane segment spans residues 255-275 (MCLLLRTFYLGWILFMLVQGF). Residues 276–381 (QNMRMIVLSV…QLSCSEESLA (106 aa)) are Cytoplasmic-facing.

It belongs to the DUP/COS family.

It localises to the membrane. In Saccharomyces cerevisiae (strain ATCC 204508 / S288c) (Baker's yeast), this protein is Protein COS1 (COS1).